A 514-amino-acid chain; its full sequence is 2,3-bisphosphoglycerate-independent phosphoglycerate mutase (514 aa).

Positions 14 and 64 each coordinate Mn(2+). S64 functions as the Phosphoserine intermediate in the catalytic mechanism. Substrate is bound by residues H125, 155 to 156 (RD), R187, R193, 263 to 266 (RADR), and K336. 5 residues coordinate Mn(2+): D403, H407, D444, H445, and H463.

It belongs to the BPG-independent phosphoglycerate mutase family. In terms of assembly, monomer. The cofactor is Mn(2+).

The enzyme catalyses (2R)-2-phosphoglycerate = (2R)-3-phosphoglycerate. The protein operates within carbohydrate degradation; glycolysis; pyruvate from D-glyceraldehyde 3-phosphate: step 3/5. Its function is as follows. Catalyzes the interconversion of 2-phosphoglycerate and 3-phosphoglycerate. This Shewanella putrefaciens (strain CN-32 / ATCC BAA-453) protein is 2,3-bisphosphoglycerate-independent phosphoglycerate mutase.